The sequence spans 135 residues: ATP synthase epsilon chain 1 (135 aa).

Belongs to the ATPase epsilon chain family. F-type ATPases have 2 components, CF(1) - the catalytic core - and CF(0) - the membrane proton channel. CF(1) has five subunits: alpha(3), beta(3), gamma(1), delta(1), epsilon(1). CF(0) has three main subunits: a, b and c.

It localises to the cell inner membrane. Produces ATP from ADP in the presence of a proton gradient across the membrane. This is ATP synthase epsilon chain 1 from Nitrobacter hamburgensis (strain DSM 10229 / NCIMB 13809 / X14).